The following is a 594-amino-acid chain: Alpha-1,4-glucan:maltose-1-phosphate maltosyltransferase (594 aa).

The interval asparagine 244–glycine 270 is disordered. Residues lysine 246, glutamine 306, and aspartate 341 each contribute to the alpha-maltose 1-phosphate site. Aspartate 377 functions as the Nucleophile in the catalytic mechanism. Asparagine 378 provides a ligand contact to alpha-maltose 1-phosphate. Glutamate 406 acts as the Proton donor in catalysis. Lysine 517–tyrosine 518 is an alpha-maltose 1-phosphate binding site.

The protein belongs to the glycosyl hydrolase 13 family. GlgE subfamily. As to quaternary structure, homodimer.

It carries out the reaction alpha-maltose 1-phosphate + [(1-&gt;4)-alpha-D-glucosyl](n) = [(1-&gt;4)-alpha-D-glucosyl](n+2) + phosphate. In terms of biological role, maltosyltransferase that uses maltose 1-phosphate (M1P) as the sugar donor to elongate linear or branched alpha-(1-&gt;4)-glucans. Is involved in a branched alpha-glucan biosynthetic pathway from trehalose, together with TreS, Mak and GlgB. In Cereibacter sphaeroides (Rhodobacter sphaeroides), this protein is Alpha-1,4-glucan:maltose-1-phosphate maltosyltransferase.